A 394-amino-acid chain; its full sequence is NAD(P)H-quinone oxidoreductase subunit H (394 aa).

The protein belongs to the complex I 49 kDa subunit family. In terms of assembly, NDH-1 can be composed of about 15 different subunits; different subcomplexes with different compositions have been identified which probably have different functions.

The protein resides in the cellular thylakoid membrane. It catalyses the reaction a plastoquinone + NADH + (n+1) H(+)(in) = a plastoquinol + NAD(+) + n H(+)(out). The enzyme catalyses a plastoquinone + NADPH + (n+1) H(+)(in) = a plastoquinol + NADP(+) + n H(+)(out). NDH-1 shuttles electrons from an unknown electron donor, via FMN and iron-sulfur (Fe-S) centers, to quinones in the respiratory and/or the photosynthetic chain. The immediate electron acceptor for the enzyme in this species is believed to be plastoquinone. Couples the redox reaction to proton translocation, and thus conserves the redox energy in a proton gradient. Cyanobacterial NDH-1 also plays a role in inorganic carbon-concentration. The protein is NAD(P)H-quinone oxidoreductase subunit H of Synechococcus sp. (strain ATCC 27144 / PCC 6301 / SAUG 1402/1) (Anacystis nidulans).